The following is a 438-amino-acid chain: Serine hydroxymethyltransferase 1 (438 aa).

(6S)-5,6,7,8-tetrahydrofolate is bound by residues L130 and 134–136 (GHL). K239 bears the N6-(pyridoxal phosphate)lysine mark.

This sequence belongs to the SHMT family. As to quaternary structure, homodimer. The cofactor is pyridoxal 5'-phosphate.

It localises to the cytoplasm. It catalyses the reaction (6R)-5,10-methylene-5,6,7,8-tetrahydrofolate + glycine + H2O = (6S)-5,6,7,8-tetrahydrofolate + L-serine. The protein operates within one-carbon metabolism; tetrahydrofolate interconversion. Its pathway is amino-acid biosynthesis; glycine biosynthesis; glycine from L-serine: step 1/1. Functionally, catalyzes the reversible interconversion of serine and glycine with tetrahydrofolate (THF) serving as the one-carbon carrier. This reaction serves as the major source of one-carbon groups required for the biosynthesis of purines, thymidylate, methionine, and other important biomolecules. Also exhibits THF-independent aldolase activity toward beta-hydroxyamino acids, producing glycine and aldehydes, via a retro-aldol mechanism. This is Serine hydroxymethyltransferase 1 from Mycobacterium tuberculosis (strain CDC 1551 / Oshkosh).